Consider the following 360-residue polypeptide: Phospho-N-acetylmuramoyl-pentapeptide-transferase (360 aa).

At 1 to 25 the chain is on the periplasmic side; the sequence is MLVWLAEHLVKYYSGFNVFSYLTFR. Residues 26 to 46 form a helical membrane-spanning segment; the sequence is AIVSLLTALFISLWMGPRMIA. The Cytoplasmic segment spans residues 47-71; it reads HLQKLSFGQVVRNDGPESHFSKRGT. Residues 72–92 form a helical membrane-spanning segment; sequence PTMGGIMILTAIVISVLLWAY. Residue Pro93 is a topological domain, periplasmic. A helical transmembrane segment spans residues 94–114; sequence SNPYVWCVLVVLVGYGVIGFV. Residues 115–131 lie on the Cytoplasmic side of the membrane; that stretch reads DDYRKVVRKDTKGLIAR. The helical transmembrane segment at 132–152 threads the bilayer; that stretch reads WKYFWMSVIALGVAFALYLVG. Residues 153 to 167 lie on the Periplasmic side of the membrane; it reads KDTPATQLVVPFFKD. A helical transmembrane segment spans residues 168–188; it reads VMPQLGLFYILLAYFVIVGTG. The Cytoplasmic portion of the chain corresponds to 189–198; that stretch reads NAVNLTDGLD. Residues 199–219 traverse the membrane as a helical segment; it reads GLAIMPTVFVAGGFALVAWAT. The Periplasmic segment spans residues 220–235; sequence GNMNFASYLHIPYLRH. The chain crosses the membrane as a helical span at residues 236 to 256; it reads AGELVIVCTAIVGAGLGFLWF. Residues 257-262 lie on the Cytoplasmic side of the membrane; sequence NTYPAQ. A helical membrane pass occupies residues 263 to 283; the sequence is VFMGDVGSLALGGALGIIAVL. The Periplasmic portion of the chain corresponds to 284-287; it reads LRQE. Residues 288–308 traverse the membrane as a helical segment; sequence FLLVIMGGVFVVETLSVILQV. Residues 309–337 are Cytoplasmic-facing; it reads GSFKLRGQRIFRMAPIHHHYELKGWPEPR. The chain crosses the membrane as a helical span at residues 338–358; the sequence is VIVRFWIISLMLVLIGLATLK. Over 359–360 the chain is Periplasmic; sequence VR.

It belongs to the glycosyltransferase 4 family. MraY subfamily. Requires Mg(2+) as cofactor.

Its subcellular location is the cell inner membrane. It catalyses the reaction UDP-N-acetyl-alpha-D-muramoyl-L-alanyl-gamma-D-glutamyl-meso-2,6-diaminopimeloyl-D-alanyl-D-alanine + di-trans,octa-cis-undecaprenyl phosphate = di-trans,octa-cis-undecaprenyl diphospho-N-acetyl-alpha-D-muramoyl-L-alanyl-D-glutamyl-meso-2,6-diaminopimeloyl-D-alanyl-D-alanine + UMP. Its pathway is cell wall biogenesis; peptidoglycan biosynthesis. In terms of biological role, catalyzes the initial step of the lipid cycle reactions in the biosynthesis of the cell wall peptidoglycan: transfers peptidoglycan precursor phospho-MurNAc-pentapeptide from UDP-MurNAc-pentapeptide onto the lipid carrier undecaprenyl phosphate, yielding undecaprenyl-pyrophosphoryl-MurNAc-pentapeptide, known as lipid I. This is Phospho-N-acetylmuramoyl-pentapeptide-transferase from Escherichia coli O157:H7.